The following is a 58-amino-acid chain: ATP synthase F(0) complex subunit k, mitochondrial (58 aa).

N6-acetyllysine; partial is present on residues Lys16 and Lys17. Residues Thr23–Phe45 traverse the membrane as a helical segment.

In terms of assembly, component of the ATP synthase complex composed at least of ATP5F1A/subunit alpha, ATP5F1B/subunit beta, ATP5MC1/subunit c (homooctomer), MT-ATP6/subunit a, MT-ATP8/subunit 8, ATP5ME/subunit e, ATP5MF/subunit f, ATP5MG/subunit g, ATP5MK/subunit k, ATP5MJ/subunit j, ATP5F1C/subunit gamma, ATP5F1D/subunit delta, ATP5F1E/subunit epsilon, ATP5PF/subunit F6, ATP5PB/subunit b, ATP5PD/subunit d, ATP5PO/subunit OSCP. ATP synthase complex consists of a soluble F(1) head domain (subunits alpha(3) and beta(3)) - the catalytic core - and a membrane F(0) domain - the membrane proton channel (subunits c, a, 8, e, f, g, k and j). These two domains are linked by a central stalk (subunits gamma, delta, and epsilon) rotating inside the F1 region and a stationary peripheral stalk (subunits F6, b, d, and OSCP). The ATP synthase complex/complex V exists as a monomeric and a dimeric supercomplex that helps shape mitochondrial cristae to optimize proton flow.

It is found in the mitochondrion membrane. Subunit k, of the mitochondrial membrane ATP synthase complex (F(1)F(0) ATP synthase or Complex V) that produces ATP from ADP in the presence of a proton gradient across the membrane which is generated by electron transport complexes of the respiratory chain. ATP synthase complex consist of a soluble F(1) head domain - the catalytic core - and a membrane F(1) domain - the membrane proton channel. These two domains are linked by a central stalk rotating inside the F(1) region and a stationary peripheral stalk. During catalysis, ATP synthesis in the catalytic domain of F(1) is coupled via a rotary mechanism of the central stalk subunits to proton translocation. In vivo, can only synthesize ATP although its ATP hydrolase activity can be activated artificially in vitro. Part of the complex F(0) domain. Required for dimerization of the ATP synthase complex and as such regulates ATP synthesis in the mitochondria. The protein is ATP synthase F(0) complex subunit k, mitochondrial of Bos taurus (Bovine).